The sequence spans 167 residues: UPF0254 protein MJ1251 (167 aa).

It belongs to the UPF0254 family.

The polypeptide is UPF0254 protein MJ1251 (Methanocaldococcus jannaschii (strain ATCC 43067 / DSM 2661 / JAL-1 / JCM 10045 / NBRC 100440) (Methanococcus jannaschii)).